An 85-amino-acid chain; its full sequence is UPF0298 protein SUB0431 (85 aa).

It belongs to the UPF0298 family.

Its subcellular location is the cytoplasm. The protein is UPF0298 protein SUB0431 of Streptococcus uberis (strain ATCC BAA-854 / 0140J).